Consider the following 384-residue polypeptide: MDALMVFDDMLDIPMSMQNNMIADDLLEQAAATASIAPIDIPMTPLQPEMEEEPEVEPEPVSQPEVVQVIEEPPTSTLVANERSEDFFEAAALLETVMEYVNSNDFTLKQLLAFNAAKKPKKSRKRKADSDAAPKQKKEKVEERYCVDSYEITEEIKGEIASAYEGLGALTPLRCAELIKESHELNGKIGGLDTIKDYVTLFSGRVCLYNTPANDVLTSYRKTYTNRYLERNKPTYNKDKTILCVRCATCGRKFKGEDDGEGCVKPNLTHATTTECGKRTICVMCSGIYAQLKTIPDLRAANRCLCCGVDKNKKASNAALFKVKKEKKEKKEKKEKKPKKAVEEEPKQYLTPEFVNDDEDSCDNDLSCLKNNTDLLATAMAELM.

The span at 327 to 339 (KKEKKEKKEKKPK) shows a compositional bias: basic residues. Residues 327 to 358 (KKEKKEKKEKKPKKAVEEEPKQYLTPEFVNDD) form a disordered region.

This is an uncharacterized protein from Magallana gigas (Pacific oyster).